Reading from the N-terminus, the 138-residue chain is Large ribosomal subunit protein uL13 (138 aa).

This sequence belongs to the universal ribosomal protein uL13 family. As to quaternary structure, part of the 50S ribosomal subunit.

Functionally, this protein is one of the early assembly proteins of the 50S ribosomal subunit, although it is not seen to bind rRNA by itself. It is important during the early stages of 50S assembly. The protein is Large ribosomal subunit protein uL13 of Picrophilus torridus (strain ATCC 700027 / DSM 9790 / JCM 10055 / NBRC 100828 / KAW 2/3).